A 398-amino-acid chain; its full sequence is 8-amino-7-oxononanoate synthase (398 aa).

R23 contacts substrate. 110–111 (GY) serves as a coordination point for pyridoxal 5'-phosphate. Substrate is bound at residue H135. Residues S181, H209, and T238 each coordinate pyridoxal 5'-phosphate. An N6-(pyridoxal phosphate)lysine modification is found at K241. T355 serves as a coordination point for substrate.

This sequence belongs to the class-II pyridoxal-phosphate-dependent aminotransferase family. BioF subfamily. Homodimer. Pyridoxal 5'-phosphate is required as a cofactor.

It carries out the reaction 6-carboxyhexanoyl-[ACP] + L-alanine + H(+) = (8S)-8-amino-7-oxononanoate + holo-[ACP] + CO2. It functions in the pathway cofactor biosynthesis; biotin biosynthesis. Functionally, catalyzes the decarboxylative condensation of pimeloyl-[acyl-carrier protein] and L-alanine to produce 8-amino-7-oxononanoate (AON), [acyl-carrier protein], and carbon dioxide. The chain is 8-amino-7-oxononanoate synthase from Cellvibrio japonicus (strain Ueda107) (Pseudomonas fluorescens subsp. cellulosa).